A 176-amino-acid chain; its full sequence is Conidiation-specific protein 8 (176 aa).

2 disordered regions span residues 1 to 66 and 79 to 162; these read MDDT…SKLI and AASE…PQGF. Low complexity predominate over residues 79–99; that stretch reads AASEAFRSERSASTSSTTSET.

This chain is Conidiation-specific protein 8 (con-8), found in Neurospora crassa (strain ATCC 24698 / 74-OR23-1A / CBS 708.71 / DSM 1257 / FGSC 987).